The sequence spans 191 residues: Oleosin 20.3 kDa (191 aa).

Residue A2 is modified to N-acetylalanine. Residues 2 to 54 (ANVDRDRRVHVDRTDKRVHQPNYEDDVGFGGYGGYGAGSDYKSRGPSTNQILA) form a polar region. A run of 2 helical transmembrane segments spans residues 52-72 (ILAL…AGLT) and 99-119 (LTIG…LTGL). The hydrophobic stretch occupies residues 55 to 128 (LIAGVPIGGT…LSSVSWVLNY (74 aa)).

The protein belongs to the oleosin family.

The protein resides in the lipid droplet. Its subcellular location is the membrane. In terms of biological role, may have a structural role to stabilize the lipid body during desiccation of the seed by preventing coalescence of the oil. Probably interacts with both lipid and phospholipid moieties of lipid bodies. May also provide recognition signals for specific lipase anchorage in lipolysis during seedling growth. This is Oleosin 20.3 kDa (OL2) from Arabidopsis thaliana (Mouse-ear cress).